Reading from the N-terminus, the 136-residue chain is Nucleoside diphosphate kinase (136 aa).

ATP is bound by residues K10, F58, R86, T92, R104, and N114. Catalysis depends on H117, which acts as the Pros-phosphohistidine intermediate.

Belongs to the NDK family. Homotetramer. Mg(2+) serves as cofactor.

It localises to the cytoplasm. The enzyme catalyses a 2'-deoxyribonucleoside 5'-diphosphate + ATP = a 2'-deoxyribonucleoside 5'-triphosphate + ADP. It catalyses the reaction a ribonucleoside 5'-diphosphate + ATP = a ribonucleoside 5'-triphosphate + ADP. Major role in the synthesis of nucleoside triphosphates other than ATP. The ATP gamma phosphate is transferred to the NDP beta phosphate via a ping-pong mechanism, using a phosphorylated active-site intermediate. The protein is Nucleoside diphosphate kinase of Mycobacterium sp. (strain MCS).